The following is a 36-amino-acid chain: Omega-agatoxin-Aa1b (36 aa).

The protein belongs to the neurotoxin 04 (omega-agtx) family. 01 (type I omega-agtx) subfamily. As to expression, expressed by the venom gland.

Its subcellular location is the secreted. Its function is as follows. Omega-agatoxin are antagonist of voltage-gated calcium channels. They block insect neuromuscular transmission presynaptically. This toxin is a blocker of L-type calcium channels (Cav/CACNA1). The chain is Omega-agatoxin-Aa1b from Agelenopsis aperta (North American funnel-web spider).